The primary structure comprises 192 residues: Protein GrpE (192 aa).

The disordered stretch occupies residues 1–34 (MSSKEQKTPNEQVSEEMENTAEQQVEATQETGEC). Polar residues predominate over residues 20–31 (TAEQQVEATQET).

The protein belongs to the GrpE family. In terms of assembly, homodimer.

The protein localises to the cytoplasm. Its function is as follows. Participates actively in the response to hyperosmotic and heat shock by preventing the aggregation of stress-denatured proteins, in association with DnaK and GrpE. It is the nucleotide exchange factor for DnaK and may function as a thermosensor. Unfolded proteins bind initially to DnaJ; upon interaction with the DnaJ-bound protein, DnaK hydrolyzes its bound ATP, resulting in the formation of a stable complex. GrpE releases ADP from DnaK; ATP binding to DnaK triggers the release of the substrate protein, thus completing the reaction cycle. Several rounds of ATP-dependent interactions between DnaJ, DnaK and GrpE are required for fully efficient folding. The polypeptide is Protein GrpE (Yersinia pestis).